Reading from the N-terminus, the 59-residue chain is MLNIFSLICLNSALYSSSFFFGKLPEAYAFLSPIVDFMPVIPLFFFLLAFVWQAAVSFR.

Positions 1-22 are excised as a propeptide; sequence MLNIFSLICLNSALYSSSFFFG. A helical transmembrane segment spans residues 30-50; the sequence is FLSPIVDFMPVIPLFFFLLAF.

In terms of assembly, PSII is composed of 1 copy each of membrane proteins PsbA, PsbB, PsbC, PsbD, PsbE, PsbF, PsbH, PsbI, PsbJ, PsbK, PsbL, PsbM, PsbT, PsbX, PsbY, PsbZ, Psb30/Ycf12, at least 3 peripheral proteins of the oxygen-evolving complex and a large number of cofactors. It forms dimeric complexes. This protein, PsbL and plastoquinone-9 are found in PSII dimers but not seen in PSII monomers.

Its subcellular location is the plastid. The protein resides in the chloroplast thylakoid membrane. In terms of biological role, one of the components of the core complex of photosystem II (PSII). PSII is a light-driven water:plastoquinone oxidoreductase that uses light energy to abstract electrons from H(2)O, generating O(2) and a proton gradient subsequently used for ATP formation. It consists of a core antenna complex that captures photons, and an electron transfer chain that converts photonic excitation into a charge separation. May be involved in PSII dimerization. Functionally, one of the components of the core complex of photosystem II (PSII). PSII is a light-driven water:plastoquinone oxidoreductase that uses light energy to abstract electrons from H(2)O, generating O(2) and a proton gradient subsequently used for ATP formation. It consists of a core antenna complex that captures photons, and an electron transfer chain that converts photonic excitation into a charge separation. This is Photosystem II reaction center protein K from Spinacia oleracea (Spinach).